The chain runs to 404 residues: Na(+)/H(+) antiporter NhaA 2 (404 aa).

The next 11 helical transmembrane spans lie at 24 to 44 (GIIL…SFSG), 67 to 87 (VLHW…GMEI), 103 to 123 (ILPI…YALF), 132 to 152 (GWGI…SLVA), 161 to 181 (VFLT…IAIF), 184 to 204 (SQIS…LILA), 216 to 236 (IILG…ATIA), 266 to 286 (TPWS…GIII), 303 to 323 (IIFG…FILI), 339 to 359 (LYGA…VSSL), and 372 to 392 (MCIM…FKFI).

The protein belongs to the NhaA Na(+)/H(+) (TC 2.A.33) antiporter family.

It localises to the cell membrane. It catalyses the reaction Na(+)(in) + 2 H(+)(out) = Na(+)(out) + 2 H(+)(in). Its function is as follows. Na(+)/H(+) antiporter that extrudes sodium in exchange for external protons. This is Na(+)/H(+) antiporter NhaA 2 from Clostridium beijerinckii (strain ATCC 51743 / NCIMB 8052) (Clostridium acetobutylicum).